A 226-amino-acid chain; its full sequence is Enolase-phosphatase E1 (226 aa).

The protein belongs to the HAD-like hydrolase superfamily. MasA/MtnC family. Monomer. Mg(2+) serves as cofactor.

It catalyses the reaction 5-methylsulfanyl-2,3-dioxopentyl phosphate + H2O = 1,2-dihydroxy-5-(methylsulfanyl)pent-1-en-3-one + phosphate. It participates in amino-acid biosynthesis; L-methionine biosynthesis via salvage pathway; L-methionine from S-methyl-5-thio-alpha-D-ribose 1-phosphate: step 3/6. Its pathway is amino-acid biosynthesis; L-methionine biosynthesis via salvage pathway; L-methionine from S-methyl-5-thio-alpha-D-ribose 1-phosphate: step 4/6. Bifunctional enzyme that catalyzes the enolization of 2,3-diketo-5-methylthiopentyl-1-phosphate (DK-MTP-1-P) into the intermediate 2-hydroxy-3-keto-5-methylthiopentenyl-1-phosphate (HK-MTPenyl-1-P), which is then dephosphorylated to form the acireductone 1,2-dihydroxy-3-keto-5-methylthiopentene (DHK-MTPene). This is Enolase-phosphatase E1 from Shewanella baltica (strain OS195).